Here is a 75-residue protein sequence, read N- to C-terminus: U6-lycotoxin-Ls1d (75 aa).

The signal sequence occupies residues 1–21 (MKLLLFTALVLVVISLIEVEA). Positions 22–25 (ENER) are excised as a propeptide.

It belongs to the neurotoxin 19 (CSTX) family. 06 (U6-Lctx) subfamily. In terms of processing, contains 4 disulfide bonds. In terms of tissue distribution, expressed by the venom gland.

Its subcellular location is the secreted. The chain is U6-lycotoxin-Ls1d from Lycosa singoriensis (Wolf spider).